The sequence spans 129 residues: Small ribosomal subunit protein uS11 (129 aa).

This sequence belongs to the universal ribosomal protein uS11 family. Part of the 30S ribosomal subunit. Interacts with proteins S7 and S18. Binds to IF-3.

In terms of biological role, located on the platform of the 30S subunit, it bridges several disparate RNA helices of the 16S rRNA. Forms part of the Shine-Dalgarno cleft in the 70S ribosome. The sequence is that of Small ribosomal subunit protein uS11 from Methylorubrum populi (strain ATCC BAA-705 / NCIMB 13946 / BJ001) (Methylobacterium populi).